The sequence spans 240 residues: uncharacterized protein (240 aa).

Over residues 1–11 (MGMTPRRKRRG) the composition is skewed to basic residues. The segment at 1-32 (MGMTPRRKRRGGAVQITRPTGRPRTPTTQTTK) is disordered. Positions 17-31 (TRPTGRPRTPTTQTT) are enriched in low complexity. The next 6 membrane-spanning stretches (helical) occupy residues 36-56 (WVVGGTTILTFVALLYLVELI), 93-113 (LMANTIPLLVLGFLMTLAGLS), 115-135 (FVWATAIIWILGGLGTWLIGN), 146-166 (IGASGLIFGWLAFLLVFGLFV), 172-192 (IVIGLVVLFVYGGILLGAMPV), and 198-218 (GVSWQGHLSGAVAGVVAAYLL).

This sequence to M.leprae ML1171.

Its subcellular location is the cell membrane. This is an uncharacterized protein from Mycobacterium tuberculosis (strain CDC 1551 / Oshkosh).